A 50-amino-acid chain; its full sequence is Insulin (50 aa).

Cystine bridges form between Cys7/Cys36, Cys19/Cys49, and Cys35/Cys40.

It belongs to the insulin family. Heterodimer of a B chain and an A chain linked by two disulfide bonds.

It is found in the secreted. Its function is as follows. Insulin decreases blood glucose concentration. It increases cell permeability to monosaccharides, amino acids and fatty acids. It accelerates glycolysis, the pentose phosphate cycle, and glycogen synthesis in liver. This chain is Insulin (ins), found in Oncorhynchus gorbuscha (Pink salmon).